Here is a 314-residue protein sequence, read N- to C-terminus: 4-hydroxy-3-methylbut-2-enyl diphosphate reductase (314 aa).

Cysteine 12 serves as a coordination point for [4Fe-4S] cluster. (2E)-4-hydroxy-3-methylbut-2-enyl diphosphate is bound by residues histidine 41 and histidine 74. Histidine 41 and histidine 74 together coordinate dimethylallyl diphosphate. 2 residues coordinate isopentenyl diphosphate: histidine 41 and histidine 74. Cysteine 96 provides a ligand contact to [4Fe-4S] cluster. A (2E)-4-hydroxy-3-methylbut-2-enyl diphosphate-binding site is contributed by histidine 124. Histidine 124 serves as a coordination point for dimethylallyl diphosphate. Histidine 124 lines the isopentenyl diphosphate pocket. Residue glutamate 126 is the Proton donor of the active site. A (2E)-4-hydroxy-3-methylbut-2-enyl diphosphate-binding site is contributed by threonine 167. Residue cysteine 197 coordinates [4Fe-4S] cluster. 4 residues coordinate (2E)-4-hydroxy-3-methylbut-2-enyl diphosphate: serine 225, serine 226, asparagine 227, and serine 269. Dimethylallyl diphosphate is bound by residues serine 225, serine 226, asparagine 227, and serine 269. Isopentenyl diphosphate-binding residues include serine 225, serine 226, asparagine 227, and serine 269.

It belongs to the IspH family. The cofactor is [4Fe-4S] cluster.

The catalysed reaction is isopentenyl diphosphate + 2 oxidized [2Fe-2S]-[ferredoxin] + H2O = (2E)-4-hydroxy-3-methylbut-2-enyl diphosphate + 2 reduced [2Fe-2S]-[ferredoxin] + 2 H(+). It catalyses the reaction dimethylallyl diphosphate + 2 oxidized [2Fe-2S]-[ferredoxin] + H2O = (2E)-4-hydroxy-3-methylbut-2-enyl diphosphate + 2 reduced [2Fe-2S]-[ferredoxin] + 2 H(+). It participates in isoprenoid biosynthesis; dimethylallyl diphosphate biosynthesis; dimethylallyl diphosphate from (2E)-4-hydroxy-3-methylbutenyl diphosphate: step 1/1. Its pathway is isoprenoid biosynthesis; isopentenyl diphosphate biosynthesis via DXP pathway; isopentenyl diphosphate from 1-deoxy-D-xylulose 5-phosphate: step 6/6. Its function is as follows. Catalyzes the conversion of 1-hydroxy-2-methyl-2-(E)-butenyl 4-diphosphate (HMBPP) into a mixture of isopentenyl diphosphate (IPP) and dimethylallyl diphosphate (DMAPP). Acts in the terminal step of the DOXP/MEP pathway for isoprenoid precursor biosynthesis. This chain is 4-hydroxy-3-methylbut-2-enyl diphosphate reductase, found in Actinobacillus pleuropneumoniae serotype 7 (strain AP76).